Here is a 460-residue protein sequence, read N- to C-terminus: Monocarboxylate transporter 12 (460 aa).

Over 1–10 the chain is Cytoplasmic; the sequence is MTQEKRSLHK. A run of 12 helical transmembrane segments spans residues 11-31, 58-78, 86-106, 115-135, 148-168, 177-197, 246-266, 282-302, 329-349, 354-374, 376-396, and 406-426; these read TPPD…VTVC, AWIH…GSYV, VGII…SFAT, LGVL…AMVG, IAMS…QLLI, LLIL…MRPI, FIIL…PFVY, AFLM…FGWV, FLPI…FGYF, VALI…SSAL, VVFF…GWLV, and FLLS…AKII. Residues 427-460 are Cytoplasmic-facing; sequence NRIKKNPQATVVRSSDIKQEVWTNGDVSCLNAIS.

It belongs to the major facilitator superfamily. Monocarboxylate porter (TC 2.A.1.13) family.

The protein localises to the cell membrane. It localises to the basolateral cell membrane. The catalysed reaction is creatine(in) = creatine(out). It carries out the reaction guanidinoacetate(in) = guanidinoacetate(out). Functionally, functions as a transporter for creatine and as well for its precursor guanidinoacetate. Transport of creatine and GAA is independent of resting membrane potential and extracellular Na(+), Cl(-), or pH. Contributes to the process of creatine biosynthesis and distribution. The chain is Monocarboxylate transporter 12 (slc16a12) from Xenopus laevis (African clawed frog).